Reading from the N-terminus, the 303-residue chain is Ribosomal protein uL3 glutamine methyltransferase (303 aa).

The protein belongs to the protein N5-glutamine methyltransferase family. PrmB subfamily.

The enzyme catalyses L-glutaminyl-[ribosomal protein uL3] + S-adenosyl-L-methionine = N(5)-methyl-L-glutaminyl-[ribosomal protein uL3] + S-adenosyl-L-homocysteine + H(+). In terms of biological role, methylates large ribosomal subunit protein uL3 on a specific glutamine residue. The sequence is that of Ribosomal protein uL3 glutamine methyltransferase from Neisseria meningitidis serogroup B (strain ATCC BAA-335 / MC58).